A 354-amino-acid polypeptide reads, in one-letter code: Uroporphyrinogen decarboxylase (354 aa).

Substrate-binding positions include 27 to 31 (RQAGR), D77, Y154, S209, and H327.

It belongs to the uroporphyrinogen decarboxylase family. Homodimer.

Its subcellular location is the cytoplasm. It carries out the reaction uroporphyrinogen III + 4 H(+) = coproporphyrinogen III + 4 CO2. Its pathway is porphyrin-containing compound metabolism; protoporphyrin-IX biosynthesis; coproporphyrinogen-III from 5-aminolevulinate: step 4/4. Its function is as follows. Catalyzes the decarboxylation of four acetate groups of uroporphyrinogen-III to yield coproporphyrinogen-III. The polypeptide is Uroporphyrinogen decarboxylase (Teredinibacter turnerae (strain ATCC 39867 / T7901)).